Here is a 363-residue protein sequence, read N- to C-terminus: Adenosine deaminase (363 aa).

2 residues coordinate Zn(2+): His42 and His44. A purine D-ribonucleoside-binding positions include 44-46 (HLD), Asp172, and Gly201. The interval 170 to 184 (IGDTGHRAADIKASA) is gating helix loop; regulates binding affinity for substrates and thus substrate selectivity. His226 is a binding site for Zn(2+). A purine D-ribonucleoside contacts are provided by Glu229, His253, and Asp310. A Zn(2+)-binding site is contributed by Asp310.

The protein belongs to the metallo-dependent hydrolases superfamily. Adenosine and AMP deaminases family. The cofactor is Zn(2+).

The enzyme catalyses adenosine + H2O + H(+) = inosine + NH4(+). The catalysed reaction is S-methyl-5'-thioadenosine + H2O + H(+) = S-methyl-5'-thioinosine + NH4(+). It functions in the pathway purine metabolism; purine nucleoside salvage. Its activity is regulated as follows. Inhibited by coformycin and methylthiocoformycin (MT-coformycin). Catalyzes the hydrolytic deamination of adenosine to produce inosine. Unlike mammalian adenosine deaminases, also catalyzes the deamination of 5'-methylthioadenosine (MTA), a by-product of polyamine biosynthesis, to produce 5'-methylthioinosine (MTI). Plays an essential role in the purine salvage pathway which allows the parasite to use host cell purines for the synthesis of nucleic acids. This Plasmodium knowlesi protein is Adenosine deaminase.